Here is a 184-residue protein sequence, read N- to C-terminus: Protein DP71L (184 aa).

Positions 1–15 are enriched in basic residues; the sequence is MSRRNKRSRRRRKKP. Residues 1–41 form a disordered region; sequence MSRRNKRSRRRRKKPLNTIQPGPSKPSAQDEPIKSVSHHSS. Important for host CHOP inhibition stretches follow at residues 125–127 and 169–173; these read VYF and LSAVL.

The protein belongs to the asfivirus DP71L family. As to quaternary structure, interacts (via C-terminus) with host PPP1CB.

Interacts with the host phosphatase PP1 catalytic subunit (PPP1CB) and recruits it to dephosphorylate EIF2S1/eIF2alpha and therefore restores the host translation that has been shut-down by the host. Also inhibits the EIF2S1/eIF2alpha-ATF4-DDIT3/CHOP pathway. This is Protein DP71L from Ornithodoros (relapsing fever ticks).